Reading from the N-terminus, the 241-residue chain is MSLLSAIDTSAASVYQPAQLLNWVYLSLQDTHQASAFDAFRPEPPAGAAPPELAFGKGRPEQLGSPLHSSYLNSVFQLQRGEALSSSVYRNASPYGSLNNIADGLSSLTEHFSDLTLTSEARKPSKRPPPNYLCHLCFNKGHYIKDCPQARPKGEGLTPYQGKKRCFGEYKCPKCKRKWMSGNSWANMGQECIKCHINVYPHKQRPLEKPDGLDVSDQSKEHPQHLCEKCKVLGYYCRRVQ.

Residues Ser65 and Ser93 each carry the phosphoserine modification. The CCHC-type zinc-finger motif lies at Tyr132–Gln149.

The chain is Zinc finger CCHC domain-containing protein 24 from Mus musculus (Mouse).